The chain runs to 1434 residues: Probable ATP-dependent RNA helicase spindle-E (1434 aa).

The Helicase ATP-binding domain maps to 125–292 (LAAINAHPVI…FATTNSIPPV (168 aa)). Residue 138 to 145 (GETGCGKT) coordinates ATP. The short motif at 238-241 (DEVH) is the DEAH box element. Positions 339–526 (KIIVIIDNME…NSVLKAKVLN (188 aa)) constitute a Helicase C-terminal domain. The 64-residue stretch at 938 to 1001 (AGDITKGMMV…RLMPRELTEQ (64 aa)) folds into the Tudor domain.

It belongs to the DEAD box helicase family. DEAH subfamily.

The protein localises to the cytoplasm. The catalysed reaction is ATP + H2O = ADP + phosphate + H(+). In terms of biological role, probable ATP-binding RNA helicase which plays a central role during spermatogenesis and oogenesis by repressing transposable elements and preventing their mobilization, which is essential for the germline integrity. Acts via the piRNA metabolic process, which mediates the repression of transposable elements during meiosis by forming complexes composed of piRNAs and Piwi and govern the methylation and subsequent repression of transposons. Involved in the repression of LTR retrotransposon copia. Also involved in telomere regulation by repressing specialized telomeric retroelements HeT-A, TAHRE, and TART; Drosophila telomeres being maintained by transposition of specialized telomeric retroelements. Involved in telomeric trans-silencing, a repression mechanism by which a transposon or a transgene inserted in subtelomeric heterochromatin has the capacity to repress in trans in the female germline, a homologous transposon, or transgene located in euchromatin. Involved in the repression of testis-expressed Stellate genes by the homologous Su(Ste) repeats. Required for anteroposterior and dorsoventral axis formation during oogenesis. The protein is Probable ATP-dependent RNA helicase spindle-E (spn-E) of Drosophila sechellia (Fruit fly).